Here is a 465-residue protein sequence, read N- to C-terminus: Cysteine--tRNA ligase (465 aa).

C30 serves as a coordination point for Zn(2+). Residues 32 to 42 (ITVYDYCHVGH) carry the 'HIGH' region motif. 3 residues coordinate Zn(2+): C214, H239, and E243. The 'KMSKS' region signature appears at 271–275 (KMSKS). K274 contacts ATP.

The protein belongs to the class-I aminoacyl-tRNA synthetase family. In terms of assembly, monomer. Requires Zn(2+) as cofactor.

The protein localises to the cytoplasm. The enzyme catalyses tRNA(Cys) + L-cysteine + ATP = L-cysteinyl-tRNA(Cys) + AMP + diphosphate. This Burkholderia multivorans (strain ATCC 17616 / 249) protein is Cysteine--tRNA ligase.